The sequence spans 372 residues: Beta-1,4-galactosyltransferase 2 (372 aa).

Topologically, residues 1-15 (MSRLLGGTLERVCKA) are cytoplasmic. The chain crosses the membrane as a helical; Signal-anchor for type II membrane protein span at residues 16 to 36 (VLLLCLLHFLVAVILYFDVYA). At 37–372 (QHLAFFSRFS…GRPPSWPPRG (336 aa)) the chain is on the lumenal side. A disordered region spans residues 56 to 97 (PAASSSSSSSNCSRPNATASSSGLPEVPSALPGPTAPTLPPC). 2 N-linked (GlcNAc...) asparagine glycosylation sites follow: asparagine 66 and asparagine 71. Residues 66–78 (NCSRPNATASSSG) are compositionally biased toward polar residues. Cysteines 97 and 139 form a disulfide. UDP-alpha-D-galactose-binding positions include 150–154 (PFRHR), 189–191 (FNR), 217–218 (VD), and tryptophan 278. Cysteines 211 and 230 form a disulfide. Aspartate 218 is a binding site for Mn(2+). 280–283 (GEDD) contributes to the N-acetyl-D-glucosamine binding site. Histidine 311 lines the Mn(2+) pocket. 311–313 (HDR) contributes to the UDP-alpha-D-galactose binding site. Position 323 (arginine 323) interacts with N-acetyl-D-glucosamine. Asparagine 357 carries N-linked (GlcNAc...) asparagine glycosylation.

It belongs to the glycosyltransferase 7 family. Requires Mn(2+) as cofactor. In terms of tissue distribution, weakly expressed in various tissues. Highest expression in prostate, testis, ovary, intestine, muscle, and in fetal brain.

It is found in the golgi apparatus. It localises to the golgi stack membrane. The catalysed reaction is D-glucose + UDP-alpha-D-galactose = lactose + UDP + H(+). The enzyme catalyses an N-acetyl-beta-D-glucosaminyl derivative + UDP-alpha-D-galactose = a beta-D-galactosyl-(1-&gt;4)-N-acetyl-beta-D-glucosaminyl derivative + UDP + H(+). It catalyses the reaction N-acetyl-D-glucosamine + UDP-alpha-D-galactose = beta-D-galactosyl-(1-&gt;4)-N-acetyl-D-glucosamine + UDP + H(+). Its pathway is protein modification; protein glycosylation. In terms of biological role, responsible for the synthesis of complex-type N-linked oligosaccharides in many glycoproteins as well as the carbohydrate moieties of glycolipids. Can produce lactose. The protein is Beta-1,4-galactosyltransferase 2 of Homo sapiens (Human).